We begin with the raw amino-acid sequence, 242 residues long: Ubiquinone biosynthesis O-methyltransferase (242 aa).

Residues arginine 44, glycine 64, aspartate 85, and methionine 129 each contribute to the S-adenosyl-L-methionine site.

This sequence belongs to the methyltransferase superfamily. UbiG/COQ3 family.

It catalyses the reaction a 3-demethylubiquinol + S-adenosyl-L-methionine = a ubiquinol + S-adenosyl-L-homocysteine + H(+). The enzyme catalyses a 3-(all-trans-polyprenyl)benzene-1,2-diol + S-adenosyl-L-methionine = a 2-methoxy-6-(all-trans-polyprenyl)phenol + S-adenosyl-L-homocysteine + H(+). Its pathway is cofactor biosynthesis; ubiquinone biosynthesis. Functionally, O-methyltransferase that catalyzes the 2 O-methylation steps in the ubiquinone biosynthetic pathway. This Klebsiella pneumoniae (strain 342) protein is Ubiquinone biosynthesis O-methyltransferase.